A 2241-amino-acid chain; its full sequence is Large tegument protein deneddylase (2241 aa).

Residues 1-238 (MKVTQASCHQ…IDLTGVVRES (238 aa)) form a deubiquitination activity region. The Peptidase C76 domain maps to 4–226 (TQASCHQGDI…AARLVSTYRD (223 aa)). Catalysis depends on residues Cys-24, Asp-160, and His-162. The disordered stretch occupies residues 239–314 (ADTAATTTTA…STTSKTLATA (76 aa)). A compositionally biased stretch (low complexity) spans 240–250 (DTAATTTTAAP). A compositionally biased stretch (pro residues) spans 251-268 (SLPPLPDPIVDPGCPPGV). A compositionally biased stretch (low complexity) spans 304–314 (PSTTSKTLATA). Residues 327 to 331 (SSAVP) form an interaction with inner tegument protein region. A disordered region spans residues 1170–1229 (RSSQQKMEEQLQETRQQMTETSERLDRSLRQDPGSSSVTRVPEKPFKGQELAGRITPPPA). Over residues 1190-1199 (TSERLDRSLR) the composition is skewed to basic and acidic residues.

This sequence belongs to the herpesviridae large tegument protein family. As to quaternary structure, interacts with host CUL1 and CUL4A; these interactions inhibit the E3 ligase activity of cullins. Interacts with inner tegument protein. Interacts with capsid vertex specific component CVC2. Interacts with the major capsid protein/MCP.

The protein resides in the virion tegument. The protein localises to the host cytoplasm. It is found in the host nucleus. The enzyme catalyses Thiol-dependent hydrolysis of ester, thioester, amide, peptide and isopeptide bonds formed by the C-terminal Gly of ubiquitin (a 76-residue protein attached to proteins as an intracellular targeting signal).. In terms of biological role, large tegument protein that plays multiple roles in the viral cycle. During viral entry, remains associated with the capsid while most of the tegument is detached and participates in the capsid transport toward the host nucleus. Plays a role in the routing of the capsid at the nuclear pore complex and subsequent uncoating. Within the host nucleus, acts as a deneddylase and promotes the degradation of nuclear CRLs (cullin-RING ubiquitin ligases) and thereby stabilizes nuclear CRL substrates, while cytoplasmic CRLs remain unaffected. These modifications prevent host cell cycle S-phase progression and create a favorable environment allowing efficient viral genome replication. Participates later in the secondary envelopment of capsids. Indeed, plays a linker role for the association of the outer viral tegument to the capsids together with the inner tegument protein. The chain is Large tegument protein deneddylase (UL48) from Human cytomegalovirus (strain AD169) (HHV-5).